The following is a 995-amino-acid chain: DNA repair protein Rev1 (995 aa).

Positions 35–121 constitute a BRCT domain; sequence RKSDLFQGIS…KIVDYKPYLL (87 aa). Disordered regions lie at residues 135–164 and 182–211; these read GKPKDNGANESKSDVEPPKDKAEVEVDSTK and VATSPEKEASASESKITNLSTTSNNSTTAR. Positions 136–164 are enriched in basic and acidic residues; it reads KPKDNGANESKSDVEPPKDKAEVEVDSTK. Residues 192-211 show a composition bias toward low complexity; it reads ASESKITNLSTTSNNSTTAR. The UmuC domain occupies 275–505; it reads VMHIDMDCFF…MSLDLLPGVG (231 aa). Aspartate 279 provides a ligand contact to Mg(2+). DCTP contacts are provided by residues 361–367, asparagine 373, and aspartate 421; that span reads SCSYEAR. Aspartate 421 contacts Mg(2+). The active site involves glutamate 422. The interval 696–868 is interaction with PolI; that stretch reads SEMRKDKPIP…HYIRSDQIVA (173 aa). The interaction with PolH/DNApol-eta stretch occupies residues 878 to 995; it reads VNPHILKLIS…IEYIRCIKCS (118 aa).

This sequence belongs to the DNA polymerase type-Y family. In terms of assembly, interacts (via C-terminus) with PolH/DNApol-eta (via C-terminal regions). Interacts (via C-terminus) with PolI. Requires Mg(2+) as cofactor.

It is found in the nucleus. Its function is as follows. Deoxycytidyl transferase involved in DNA repair. Transfers a dCMP residue from dCTP to the 3'-end of a DNA primer in a template-dependent reaction. May assist in the first step in the bypass of abasic lesions by the insertion of a nucleotide opposite the lesion. Required for normal induction of mutations by physical and chemical agents. During homologous recombination (HR) repair of DNA double-strand breaks (DSBs) regulates the extent of repair synthesis. Possibly recruits the DNA polymerase zeta complex or another translesion polymerase to early DSB repair intermediates to initiate repair synthesis, while also blocking the access of more processive polymerases preventing them from acting during the initial stages of HR repair. The polypeptide is DNA repair protein Rev1 (Drosophila melanogaster (Fruit fly)).